The following is a 396-amino-acid chain: 1-deoxy-D-xylulose 5-phosphate reductoisomerase (396 aa).

The NADPH site is built by Thr-10, Gly-11, Ser-12, Ile-13, Asn-38, and Asn-123. Lys-124 contributes to the 1-deoxy-D-xylulose 5-phosphate binding site. Residue Glu-125 coordinates NADPH. Asp-149 contributes to the Mn(2+) binding site. 1-deoxy-D-xylulose 5-phosphate-binding residues include Ser-150, Glu-151, Ser-185, and His-208. Glu-151 contacts Mn(2+). Gly-214 contacts NADPH. Ser-221, Asn-226, Lys-227, and Glu-230 together coordinate 1-deoxy-D-xylulose 5-phosphate. Glu-230 provides a ligand contact to Mn(2+).

It belongs to the DXR family. Mg(2+) is required as a cofactor. The cofactor is Mn(2+).

It catalyses the reaction 2-C-methyl-D-erythritol 4-phosphate + NADP(+) = 1-deoxy-D-xylulose 5-phosphate + NADPH + H(+). Its pathway is isoprenoid biosynthesis; isopentenyl diphosphate biosynthesis via DXP pathway; isopentenyl diphosphate from 1-deoxy-D-xylulose 5-phosphate: step 1/6. Functionally, catalyzes the NADPH-dependent rearrangement and reduction of 1-deoxy-D-xylulose-5-phosphate (DXP) to 2-C-methyl-D-erythritol 4-phosphate (MEP). The chain is 1-deoxy-D-xylulose 5-phosphate reductoisomerase from Shewanella piezotolerans (strain WP3 / JCM 13877).